We begin with the raw amino-acid sequence, 503 residues long: MEEFQRYLELDRSRQHDFLYPLLFREYIYALAHDHGLNKSILSENAGYGNKSSSIIVKRLITRMYQQNPLIFSANDSIQNQFFGHNKNLYSQIISEGFAVIVEIPFSLRLVSFLERKEIAKSQNLQSIHSIFPFLEDKFSHLDYVSXVLIPYHIHLEILVQTLRYWVKDASSLHLLRFFLHEYWNTLITPKKYITLFSKGNPRLFLFLYNSHICEYESIFLFLRNKSSHLRSTSSGIFFERIYFYVKIKHFVKVFFDNDFQCILWFFKDPFMHYVKYQGKSILASKXTPLLMNKWKYYLVNLWQYHFYAWFQPGRININQLCXYSLDFLGYRSSVRLNSSVVXXQMLKNLFLINNAMKXFETIVPIIPLIGSLSKANFCNTLGHPISKPTRSDSSDSDIINRFLRICRNLSHYHSGSSKKKSLYRVKYILRLSCVKTLARKHKITIRTFLKKSGSEFLEKFLTEEEVVLSLIFPRTYSTSRRLYXZQSWYLDITSINDLVNYE.

Belongs to the intron maturase 2 family. MatK subfamily.

The protein resides in the plastid. Its subcellular location is the chloroplast. In terms of biological role, usually encoded in the trnK tRNA gene intron. Probably assists in splicing its own and other chloroplast group II introns. The sequence is that of Maturase K from Backhousia subargentea (Giant ironwood).